A 593-amino-acid polypeptide reads, in one-letter code: NADH-quinone oxidoreductase subunit C/D (593 aa).

The segment at Met1–Gln184 is NADH dehydrogenase I subunit C. The NADH dehydrogenase I subunit D stretch occupies residues Asp208–Arg593.

In the N-terminal section; belongs to the complex I 30 kDa subunit family. It in the C-terminal section; belongs to the complex I 49 kDa subunit family. As to quaternary structure, NDH-1 is composed of 13 different subunits. Subunits NuoB, CD, E, F, and G constitute the peripheral sector of the complex.

It is found in the cell inner membrane. The catalysed reaction is a quinone + NADH + 5 H(+)(in) = a quinol + NAD(+) + 4 H(+)(out). Its function is as follows. NDH-1 shuttles electrons from NADH, via FMN and iron-sulfur (Fe-S) centers, to quinones in the respiratory chain. The immediate electron acceptor for the enzyme in this species is believed to be ubiquinone. Couples the redox reaction to proton translocation (for every two electrons transferred, four hydrogen ions are translocated across the cytoplasmic membrane), and thus conserves the redox energy in a proton gradient. This chain is NADH-quinone oxidoreductase subunit C/D, found in Pseudomonas putida (strain ATCC 47054 / DSM 6125 / CFBP 8728 / NCIMB 11950 / KT2440).